Here is a 283-residue protein sequence, read N- to C-terminus: DNA repair protein RecO (283 aa).

Positions 254 to 264 are enriched in polar residues; it reads SSPASVGSSAT. The disordered stretch occupies residues 254–283; sequence SSPASVGSSATRYFAQGDTDENDRDPPGAR.

This sequence belongs to the RecO family.

Involved in DNA repair and RecF pathway recombination. The protein is DNA repair protein RecO of Roseiflexus sp. (strain RS-1).